The sequence spans 287 residues: Homoserine kinase (287 aa).

ATP is bound at residue P78–T88.

It belongs to the GHMP kinase family. Homoserine kinase subfamily.

Its subcellular location is the cytoplasm. It catalyses the reaction L-homoserine + ATP = O-phospho-L-homoserine + ADP + H(+). Its pathway is amino-acid biosynthesis; L-threonine biosynthesis; L-threonine from L-aspartate: step 4/5. Catalyzes the ATP-dependent phosphorylation of L-homoserine to L-homoserine phosphate. The protein is Homoserine kinase of Lactobacillus gasseri (strain ATCC 33323 / DSM 20243 / BCRC 14619 / CIP 102991 / JCM 1131 / KCTC 3163 / NCIMB 11718 / NCTC 13722 / AM63).